The following is a 49-amino-acid chain: Large ribosomal subunit protein bL33B (49 aa).

Belongs to the bacterial ribosomal protein bL33 family.

The protein is Large ribosomal subunit protein bL33B of Lacticaseibacillus paracasei (strain ATCC 334 / BCRC 17002 / CCUG 31169 / CIP 107868 / KCTC 3260 / NRRL B-441) (Lactobacillus paracasei).